The sequence spans 446 residues: L-2-hydroxyglutarate dehydrogenase, mitochondrial (446 aa).

The transit peptide at 1–28 (MKNSSSMLKGVKSFIGSGIYTNKPIYDV) directs the protein to the mitochondrion.

This sequence belongs to the L2HGDH family. FAD is required as a cofactor.

The protein localises to the mitochondrion. It carries out the reaction (S)-2-hydroxyglutarate + A = 2-oxoglutarate + AH2. The protein is L-2-hydroxyglutarate dehydrogenase, mitochondrial (l2hgdh) of Dictyostelium discoideum (Social amoeba).